The sequence spans 351 residues: Small ribosomal subunit biogenesis GTPase RsgA (351 aa).

Positions 107-277 (ENLLQRPDNF…LIDSPGIREF (171 aa)) constitute a CP-type G domain. Residues 163-166 (NKTD) and 219-227 (GQSGVGKSS) contribute to the GTP site. 4 residues coordinate Zn(2+): Cys-301, Cys-306, His-308, and Cys-314.

Belongs to the TRAFAC class YlqF/YawG GTPase family. RsgA subfamily. In terms of assembly, monomer. Associates with 30S ribosomal subunit, binds 16S rRNA. Zn(2+) is required as a cofactor.

It localises to the cytoplasm. Functionally, one of several proteins that assist in the late maturation steps of the functional core of the 30S ribosomal subunit. Helps release RbfA from mature subunits. May play a role in the assembly of ribosomal proteins into the subunit. Circularly permuted GTPase that catalyzes slow GTP hydrolysis, GTPase activity is stimulated by the 30S ribosomal subunit. In Marinobacter nauticus (strain ATCC 700491 / DSM 11845 / VT8) (Marinobacter aquaeolei), this protein is Small ribosomal subunit biogenesis GTPase RsgA.